The chain runs to 44 residues: Small ribosomal subunit protein eS31 (44 aa).

Zn(2+)-binding residues include cysteine 18, cysteine 21, cysteine 35, and cysteine 38. Residues 18–38 (CPRCGDTFLAAHDDRQVCGRC) form a C4-type zinc finger.

Belongs to the eukaryotic ribosomal protein eS31 family. In terms of assembly, part of the 30S ribosomal subunit. Zn(2+) serves as cofactor.

In Halobacterium salinarum (strain ATCC 29341 / DSM 671 / R1), this protein is Small ribosomal subunit protein eS31.